The chain runs to 48 residues: Small, acid-soluble spore protein P (48 aa).

The span at 1–12 (MTNKNDGKDMRK) shows a compositional bias: basic and acidic residues. The segment at 1 to 48 (MTNKNDGKDMRKNAPKGDNPGQPEPLDGSKKVKNRNHTRQKHNTSHDM) is disordered. Positions 31–48 (KVKNRNHTRQKHNTSHDM) are enriched in basic residues.

It belongs to the SspP family.

It localises to the spore core. The polypeptide is Small, acid-soluble spore protein P (Geobacillus kaustophilus (strain HTA426)).